A 222-amino-acid chain; its full sequence is Glutathione S-transferase A1 (222 aa).

N-acetylmethionine is present on Met-1. Position 2 is an N-acetylalanine; in Glutathione S-transferase A1, N-terminally processed (Ala-2). One can recognise a GST N-terminal domain in the interval 3-83 (GKPTLHYFNG…YIATKYNLYG (81 aa)). Lys-4 carries the post-translational modification N6-succinyllysine. Glutathione is bound by residues Tyr-9, Lys-45, 54 to 55 (QV), and 67 to 68 (QT). Positions 85-208 (DMKERALIDM…QPGSQRKPPT (124 aa)) constitute a GST C-terminal domain.

This sequence belongs to the GST superfamily. Alpha family. As to quaternary structure, homodimer or heterodimer of GSTA1 and GSTA2. As to expression, expressed in corpus luteum, adrenal gland, testis, liver, lung, thyroid and kidney.

The protein resides in the cytoplasm. It carries out the reaction RX + glutathione = an S-substituted glutathione + a halide anion + H(+). It catalyses the reaction prostaglandin A2 + glutathione = prostaglandin A2-S-(R)-glutathione. The enzyme catalyses prostaglandin J2 + glutathione = prostaglandin J2-S-(R)-glutathione. The catalysed reaction is (13S)-hydroperoxy-(9Z,11E)-octadecadienoate + 2 glutathione = (13S)-hydroxy-(9Z,11E)-octadecadienoate + glutathione disulfide + H2O. It carries out the reaction androst-5-ene-3,17-dione = androst-4-ene-3,17-dione. Its function is as follows. Glutathione S-transferase that catalyzes the nucleophilic attack of the sulfur atom of glutathione on the electrophilic groups of a wide range of exogenous and endogenous compounds. Involved in the formation of glutathione conjugates of both prostaglandin A2 (PGA2) and prostaglandin J2 (PGJ2). It also catalyzes the isomerization of D5-androstene-3,17-dione (AD) into D4-androstene-3,17-dione and may therefore play an important role in hormone biosynthesis. Through its glutathione-dependent peroxidase activity toward the fatty acid hydroperoxide (13S)-hydroperoxy-(9Z,11E)-octadecadienoate/13-HPODE it is also involved in the metabolism of oxidized linoleic acid. This Bos taurus (Bovine) protein is Glutathione S-transferase A1 (GSTA1).